Consider the following 736-residue polypeptide: Elongation factor 2 (736 aa).

Residues 18-261 (EQVRNIGITA…MVVKFIPNPR (244 aa)) form the tr-type G domain. Residues 27-34 (AHVDHGKT), 93-97 (DTPGH), and 147-150 (NKVD) each bind GTP. At histidine 602 the chain carries Diphthamide.

This sequence belongs to the TRAFAC class translation factor GTPase superfamily. Classic translation factor GTPase family. EF-G/EF-2 subfamily.

Its subcellular location is the cytoplasm. Catalyzes the GTP-dependent ribosomal translocation step during translation elongation. During this step, the ribosome changes from the pre-translocational (PRE) to the post-translocational (POST) state as the newly formed A-site-bound peptidyl-tRNA and P-site-bound deacylated tRNA move to the P and E sites, respectively. Catalyzes the coordinated movement of the two tRNA molecules, the mRNA and conformational changes in the ribosome. In Staphylothermus marinus (strain ATCC 43588 / DSM 3639 / JCM 9404 / F1), this protein is Elongation factor 2.